A 228-amino-acid polypeptide reads, in one-letter code: Uracil-DNA glycosylase (228 aa).

Asp64 serves as the catalytic Proton acceptor.

This sequence belongs to the uracil-DNA glycosylase (UDG) superfamily. UNG family. As to quaternary structure, monomer.

It is found in the cytoplasm. The enzyme catalyses Hydrolyzes single-stranded DNA or mismatched double-stranded DNA and polynucleotides, releasing free uracil.. Its function is as follows. Excises uracil residues from the DNA which can arise as a result of misincorporation of dUMP residues by DNA polymerase or due to deamination of cytosine. The polypeptide is Uracil-DNA glycosylase (Escherichia coli O6:H1 (strain CFT073 / ATCC 700928 / UPEC)).